The sequence spans 301 residues: Diaminopimelate epimerase (301 aa).

Residues N15, Q47, and N67 each contribute to the substrate site. C76 acts as the Proton donor in catalysis. Substrate-binding positions include G77–N78, N163, N197, and E215–R216. C224 (proton acceptor) is an active-site residue. G225–S226 lines the substrate pocket.

The protein belongs to the diaminopimelate epimerase family. Homodimer.

The protein resides in the cytoplasm. The catalysed reaction is (2S,6S)-2,6-diaminopimelate = meso-2,6-diaminopimelate. Its pathway is amino-acid biosynthesis; L-lysine biosynthesis via DAP pathway; DL-2,6-diaminopimelate from LL-2,6-diaminopimelate: step 1/1. In terms of biological role, catalyzes the stereoinversion of LL-2,6-diaminopimelate (L,L-DAP) to meso-diaminopimelate (meso-DAP), a precursor of L-lysine and an essential component of the bacterial peptidoglycan. The sequence is that of Diaminopimelate epimerase from Rhizobium etli (strain ATCC 51251 / DSM 11541 / JCM 21823 / NBRC 15573 / CFN 42).